Consider the following 547-residue polypeptide: Chaperonin GroEL (547 aa).

ATP is bound by residues 30–33 (TLGP), lysine 51, 87–91 (DGTTT), glycine 415, and aspartate 496.

The protein belongs to the chaperonin (HSP60) family. Forms a cylinder of 14 subunits composed of two heptameric rings stacked back-to-back. Interacts with the co-chaperonin GroES.

The protein localises to the cytoplasm. It carries out the reaction ATP + H2O + a folded polypeptide = ADP + phosphate + an unfolded polypeptide.. Functionally, together with its co-chaperonin GroES, plays an essential role in assisting protein folding. The GroEL-GroES system forms a nano-cage that allows encapsulation of the non-native substrate proteins and provides a physical environment optimized to promote and accelerate protein folding. This is Chaperonin GroEL from Haemophilus ducreyi (strain 35000HP / ATCC 700724).